The primary structure comprises 390 residues: DNA replication and repair protein RecF (390 aa).

30–37 contacts ATP; sequence GDNAQGKS.

Belongs to the RecF family.

Its subcellular location is the cytoplasm. In terms of biological role, the RecF protein is involved in DNA metabolism; it is required for DNA replication and normal SOS inducibility. RecF binds preferentially to single-stranded, linear DNA. It also seems to bind ATP. This chain is DNA replication and repair protein RecF, found in Trichodesmium erythraeum (strain IMS101).